Consider the following 414-residue polypeptide: O-methyltransferase sirM (414 aa).

Residue D270 coordinates S-adenosyl-L-methionine. The active-site Proton acceptor is the H321.

The protein belongs to the class I-like SAM-binding methyltransferase superfamily. Cation-independent O-methyltransferase family. COMT subfamily.

It functions in the pathway mycotoxin biosynthesis. In terms of biological role, O-methyltransferase; part of the gene cluster that mediates the biosynthesis of sirodesmin PL, an epipolythiodioxopiperazine (ETP) characterized by a disulfide bridged cyclic dipeptide and that acts as a phytotoxin which is involved in the blackleg didease of canola. SirD catalyzes the O-prenylation of L-tyrosine (L-Tyr) in the presence of dimethylallyl diphosphate (DMAPP) to yield 4-O-dimethylallyl-L-Tyr, and therefore represents probably the first pathway-specific enzyme in the biosynthesis of sirodesmin PL. 4-O-dimethylallyl-L-Tyr, then undergoes condensation with L-Ser in a reaction catalyzed by the non-ribosomal peptide synthase sirP to form the diketopiperazine (DKP) backbone. Further bishydroxylation of the DKP performed by the cytochrome P450 monooxygenase sirC leads to the production of the intermediate phomamide. This step is essential to form the reactive thiol group required for toxicity of sirodesmin PL. The next steps of sirodesmin biosynthesis are not well understood yet, but some predictions could be made from intermediate compounds identification. Phomamide is converted into phomalizarine via oxidation, probably by sirT. Further oxidation, methylation (by sirM or sirN) and reduction steps convert phomalizarine to deacetyl sirodesmin. Finally, acetyltransferase sirH probably acetylates deacetyl sirodesmin to produce sirodesmin PL. The chain is O-methyltransferase sirM from Leptosphaeria maculans (Blackleg fungus).